Reading from the N-terminus, the 153-residue chain is MAL-like protein (153 aa).

4 consecutive transmembrane segments (helical) span residues 22–42 (LFLT…FLVW), 59–79 (VMYV…SYLF), 97–117 (GTTG…TIVS), and 131–151 (AASF…FSIY). In terms of domain architecture, MARVEL spans 22–153 (LFLTIPFAFF…ILHAFSIYYH (132 aa)).

Belongs to the MAL family.

It is found in the membrane. This Homo sapiens (Human) protein is MAL-like protein (MALL).